A 154-amino-acid chain; its full sequence is OCIA domain-containing protein 2 (154 aa).

Residues 1-22 form a disordered region; the sequence is MASASARGNQDKDAHFPPPSKQ. The OCIA domain occupies 1-120; the sequence is MASASARGNQ…HFFEDQLRGA (120 aa). Lysine 41 bears the N6-acetyllysine mark.

Interacts (via OCIA domain) with OCIAD1/ASRIJ and STAT3.

The protein localises to the endosome. It localises to the mitochondrion. The protein resides in the mitochondrion inner membrane. In terms of biological role, has an essential role in the assembly of mitochondrial respiratory chain complex III. Is also required for STAT3 activation and plays a role in cell migration. This chain is OCIA domain-containing protein 2 (OCIAD2), found in Homo sapiens (Human).